A 790-amino-acid polypeptide reads, in one-letter code: Kinesin-like protein KIF9 (790 aa).

Residues 6-340 (KVHAFVRVKP…LRFASRMKLV (335 aa)) form the Kinesin motor domain. ATP is bound by residues 12–14 (RVK) and 93–100 (GQTGAGKT). Residues 342 to 380 (TEPAINEKYDAERMVKNLEKELALLKQELAIHDSLTNRT) adopt a coiled-coil conformation. The tract at residues 477–578 (QNFGLGVAPF…IRPDTPPSKP (102 aa)) is disordered. Residues 525–534 (VSTSKTQLVP) show a composition bias toward polar residues. Thr-530 carries the phosphothreonine modification. Composition is skewed to basic and acidic residues over residues 537-552 (KDGD…RETS) and 561-570 (SPKEELRPIR). Ser-546 carries the phosphoserine modification. Positions 658–690 (LLILKLKDLKKQYRSEYQDLRDLRAEIQYCQHL) form a coiled coil.

This sequence belongs to the TRAFAC class myosin-kinesin ATPase superfamily. Kinesin family. In terms of assembly, interacts with HYDIN.

It localises to the cytoplasm. It is found in the cytoskeleton. Its subcellular location is the cell projection. The protein localises to the cilium. The protein resides in the flagellum. It localises to the flagellum axoneme. Functionally, essential for normal male fertility and for progressive motility of spermatozoa. This chain is Kinesin-like protein KIF9 (KIF9), found in Homo sapiens (Human).